The sequence spans 242 residues: MTLDLDASKKDEKLLITTIQQEYKILAEYKMIESEKLSGIYVIPSYENSLQWYGVFFGRQGFYAESVFRFSILLPDRFPDEKSLPSIIFQQDVMHPHVCPFTHTLDISHAFSEWRCGEDHLWQVLKYMQAIFFDPVDSIRGIETDKLKNAEAAELLMNNRQEYAARVQENIKESKAHIYDTPPTEDPHYIVFEKFQPDVHGPVLERIKAGRNKAEASQQANGGHATGLSWVKEGEFKPLSIE.

The UBC core domain maps to 20 to 176 (QQEYKILAEY…VQENIKESKA (157 aa)).

The protein belongs to the ubiquitin-conjugating enzyme family. FTS subfamily.

The chain is Protein crossbronx (cbx) from Drosophila ananassae (Fruit fly).